Here is a 429-residue protein sequence, read N- to C-terminus: UDP-N-acetylglucosamine 1-carboxyvinyltransferase (429 aa).

Phosphoenolpyruvate is bound at residue 22 to 23; that stretch reads KN. Arg-102 contacts UDP-N-acetyl-alpha-D-glucosamine. Cys-126 functions as the Proton donor in the catalytic mechanism. Residue Cys-126 is modified to 2-(S-cysteinyl)pyruvic acid O-phosphothioketal. UDP-N-acetyl-alpha-D-glucosamine contacts are provided by residues 131 to 135, Asp-316, and Ile-338; that span reads RPVDL.

It belongs to the EPSP synthase family. MurA subfamily.

The protein resides in the cytoplasm. It catalyses the reaction phosphoenolpyruvate + UDP-N-acetyl-alpha-D-glucosamine = UDP-N-acetyl-3-O-(1-carboxyvinyl)-alpha-D-glucosamine + phosphate. It participates in cell wall biogenesis; peptidoglycan biosynthesis. Cell wall formation. Adds enolpyruvyl to UDP-N-acetylglucosamine. The sequence is that of UDP-N-acetylglucosamine 1-carboxyvinyltransferase from Nitrobacter winogradskyi (strain ATCC 25391 / DSM 10237 / CIP 104748 / NCIMB 11846 / Nb-255).